We begin with the raw amino-acid sequence, 917 residues long: Translation initiation factor IF-2 (917 aa).

A disordered region spans residues 1-312 (MEEQKSIKET…KGGREENENT (312 aa)). Residues 20–30 (TKKKLVIKKKA) show a composition bias toward basic residues. Over residues 41–59 (PGAQGQTTATEAKQSSPAS) the composition is skewed to polar residues. Composition is skewed to basic and acidic residues over residues 60-76 (SDKK…EAKR) and 95-118 (RPDR…RKPE). Gly residues-rich tracts occupy residues 132-141 (SGGGQGGGNQ), 167-256 (QTGG…GYQG), and 281-293 (APGG…GPGG). Residues 297 to 312 (RVFDKEKGGREENENT) show a composition bias toward basic and acidic residues. In terms of domain architecture, tr-type G spans 414–587 (TRPPVVTIMG…ELLDHKANPK (174 aa)). The segment at 423-430 (GHVDHGKT) is G1. Residue 423–430 (GHVDHGKT) coordinates GTP. The G2 stretch occupies residues 448–452 (GITQH). The tract at residues 469–472 (DTPG) is G3. Residues 469–473 (DTPGH) and 523–526 (NKID) contribute to the GTP site. Positions 523 to 526 (NKID) are G4. The segment at 559-561 (SAK) is G5.

This sequence belongs to the TRAFAC class translation factor GTPase superfamily. Classic translation factor GTPase family. IF-2 subfamily.

It is found in the cytoplasm. Functionally, one of the essential components for the initiation of protein synthesis. Protects formylmethionyl-tRNA from spontaneous hydrolysis and promotes its binding to the 30S ribosomal subunits. Also involved in the hydrolysis of GTP during the formation of the 70S ribosomal complex. This chain is Translation initiation factor IF-2, found in Leptospira biflexa serovar Patoc (strain Patoc 1 / ATCC 23582 / Paris).